A 723-amino-acid polypeptide reads, in one-letter code: Bifunctional lysine-specific demethylase and histidyl-hydroxylase NO66 (723 aa).

Disordered regions lie at residues 13 to 34 (KKTA…QKAA) and 48 to 213 (SAVK…APSC). A compositionally biased stretch (basic residues) spans 14–31 (KTAKKPAKKTTKQNRQKQ). The segment covering 49–72 (AVKQNNGAKGKAKANGVKGNAKAQ) has biased composition (low complexity). Acidic residues-rich tracts occupy residues 88-106 (ESVD…EDNE) and 114-129 (EDDY…EFEE). A compositionally biased stretch (low complexity) spans 133–155 (NSPSGSCSCSASSGSSNTENSPP). Positions 190 to 199 (EQKEGKELSK) are enriched in basic and acidic residues. Low complexity predominate over residues 204 to 213 (KSAPAAAPSC). A JmjC domain is found at 379–518 (NPSTYLKGLR…NLMEALMPAV (140 aa)). Fe cation-binding residues include His419, Asp421, and His484.

It belongs to the ROX family. NO66 subfamily. Fe(2+) serves as cofactor.

The protein resides in the nucleus. The catalysed reaction is N(6),N(6)-dimethyl-L-lysyl(36)-[histone H3] + 2 2-oxoglutarate + 2 O2 = L-lysyl(36)-[histone H3] + 2 formaldehyde + 2 succinate + 2 CO2. Oxygenase that can act as both a histone lysine demethylase and a ribosomal histidine hydroxylase. Specifically demethylates 'Lys-4' (H3K4me) and 'Lys-36' (H3K36me) of histone H3, thereby playing a central role in histone code. This Drosophila grimshawi (Hawaiian fruit fly) protein is Bifunctional lysine-specific demethylase and histidyl-hydroxylase NO66.